The following is a 309-amino-acid chain: MSKNNGKGAKGEFEFPQPAKKQTFSEMIYNPQEGTFFGRTGKSWSQLLLFYTIFYIVLAALFTICMQGLLSTISDTEPKWKLQDSLIGTNPGLGFRPLSEQTERGSVIAFDGKKPAESDYWIELIDDFLRDYNHTEGRDMKHCGFGQVLEPTDVCVVNTDLFGGCSKANNYGYKTNQPCIFLKLNKIFGWIPEVYDKEEKDMPDDLKKVINETKTEERQQVWVSCNGHLGKDKENFQNIRYFPSQGFPSYYYPFLNQPGYLSPLVAVQFNSPPKGQMLDVECRAWAKNIQYSGSVRDRKGSVTFQILLD.

At 1 to 45 the chain is on the cytoplasmic side; the sequence is MSKNNGKGAKGEFEFPQPAKKQTFSEMIYNPQEGTFFGRTGKSWS. The chain crosses the membrane as a helical; Signal-anchor for type II membrane protein span at residues 46–66; the sequence is QLLLFYTIFYIVLAALFTICM. Topologically, residues 67 to 309 are extracellular; the sequence is QGLLSTISDT…GSVTFQILLD (243 aa). Asparagine 133 carries an N-linked (GlcNAc...) asparagine glycan. Disulfide bonds link cysteine 143–cysteine 155 and cysteine 165–cysteine 179. N-linked (GlcNAc...) asparagine glycosylation is present at asparagine 211. A disulfide bridge connects residues cysteine 225 and cysteine 282.

It belongs to the X(+)/potassium ATPases subunit beta family. In terms of assembly, the sodium/potassium-transporting ATPase is composed of a catalytic alpha subunit, an auxiliary non-catalytic beta subunit and an additional regulatory subunit. Interacts with nkain. In embryos, it is expressed in the neurons of the CNS and PNS, in Garland cells and posterior spiracles. In adults, it is concentrated in the thorax and abdomen (muscle tissue, digestive system and Malpighian tubules) and weakly expressed in the head. Expression is diffuse in the nervous system.

The protein resides in the cell membrane. In terms of biological role, this is the non-catalytic component of the active enzyme, which catalyzes the hydrolysis of ATP coupled with the exchange of Na(+) and K(+) ions across the plasma membrane. The beta subunit regulates, through assembly of alpha/beta heterodimers, the number of sodium pumps transported to the plasma membrane. The polypeptide is Sodium/potassium-transporting ATPase subunit beta-1 (nrv1) (Drosophila melanogaster (Fruit fly)).